We begin with the raw amino-acid sequence, 858 residues long: Ubiquitin carboxyl-terminal hydrolase 5 (858 aa).

Ala-2 carries the post-translational modification N-acetylalanine. Residues 74–96 (RRTRRPKEEDPATGTGDPPRKKP) form a disordered region. Lys-113 is covalently cross-linked (Glycyl lysine isopeptide (Lys-Gly) (interchain with G-Cter in SUMO)). Phosphoserine is present on residues Ser-149 and Ser-156. Residues 175–283 (QVSKHAFSLK…EHLSHFGIDM (109 aa)) form a UBP-type; degenerate zinc finger. A disulfide bridge links Cys-195 with Cys-816. Zn(2+) is bound by residues Cys-199 and Cys-202. Trp-209 provides a ligand contact to substrate. Cys-219 is a Zn(2+) binding site. 221-224 (RRYF) is a binding site for substrate. His-232 serves as a coordination point for Zn(2+). Substrate contacts are provided by Tyr-259, Tyr-261, and Asp-264. Thr-292 carries the post-translational modification Phosphothreonine. The USP domain maps to 326–856 (TGIRNLGNSC…LGYIYFYQRV (531 aa)). Residue Cys-335 is the Nucleophile of the active site. Phosphothreonine is present on Thr-623. 2 UBA domains span residues 654-695 (MLDE…VMSH) and 722-762 (PPPE…IFSH). Residues Ser-779, Ser-783, and Ser-785 each carry the phosphoserine modification. The Proton acceptor role is filled by His-818.

This sequence belongs to the peptidase C19 family. In terms of assembly, homodimer. Interacts with TRIML1. In terms of processing, ubiquitinated by SMURF1; leading to proteasomal degradation. SUMOylated at Lys-113; SUMOylation affects the interaction with Cav3.2 channels.

It is found in the cytoplasm. It localises to the stress granule. The protein resides in the nucleus. The catalysed reaction is Thiol-dependent hydrolysis of ester, thioester, amide, peptide and isopeptide bonds formed by the C-terminal Gly of ubiquitin (a 76-residue protein attached to proteins as an intracellular targeting signal).. Its function is as follows. Deubiquitinating enzyme that participates in a wide range of cellular processes by specifically cleaving isopeptide bonds between ubiquitin and substrate proteins or ubiquitin itself. Affects thereby important cellular signaling pathways such as NF-kappa-B, Wnt/beta-catenin, and cytokine production by regulating ubiquitin-dependent protein degradation. Participates in the activation of the Wnt signaling pathway by promoting FOXM1 deubiquitination and stabilization that induces the recruitment of beta-catenin to Wnt target gene promoter. Regulates the assembly and disassembly of heat-induced stress granules by mediating the hydrolysis of unanchored ubiquitin chains. Promotes lipopolysaccharide-induced apoptosis and inflammatory response by stabilizing the TXNIP protein. Affects T-cell biology by stabilizing the inhibitory receptor on T-cells PDC1. Acts as a negative regulator of autophagy by regulating ULK1 at both protein and mRNA levels. Acts also as a negative regulator of type I interferon production by simultaneously removing both 'Lys-48'-linked unanchored and 'Lys-63'-linked anchored polyubiquitin chains on the transcription factor IRF3. Modulates the stability of DNA mismatch repair protein MLH1 and counteracts the effect of the ubiquitin ligase UBR4. Upon activation by insulin, it gets phosphorylated through mTORC1-mediated phosphorylation to enhance YTHDF1 stability by removing 'Lys-11'-linked polyubiquitination. May also deubiquitinate other substrates such as the calcium channel CACNA1H. The sequence is that of Ubiquitin carboxyl-terminal hydrolase 5 (USP5) from Homo sapiens (Human).